The primary structure comprises 206 residues: MELKVTTLEGKDAGSVQLSDEIFGLDPRSDIIQRCVIWQLAKRQAGTHKAKGRAEIWRTGKKMYKQKGTGGARHGSQRVPQFRGGGRAFGPVVRSHAIDLPKKVRAMALKHALSAKAKDGGLIVIDQATLDSAKTKALVGHFAGLGLTSALIIDGAELNNGFAVAARNIPNIDVLPIQGINVYDILRRQKLVLTKAAVDALEARFK.

This sequence belongs to the universal ribosomal protein uL4 family. As to quaternary structure, part of the 50S ribosomal subunit.

One of the primary rRNA binding proteins, this protein initially binds near the 5'-end of the 23S rRNA. It is important during the early stages of 50S assembly. It makes multiple contacts with different domains of the 23S rRNA in the assembled 50S subunit and ribosome. Its function is as follows. Forms part of the polypeptide exit tunnel. The polypeptide is Large ribosomal subunit protein uL4 (Rhodopseudomonas palustris (strain BisA53)).